Consider the following 159-residue polypeptide: Protein-export protein SecB (159 aa).

The protein belongs to the SecB family. Homotetramer, a dimer of dimers. One homotetramer interacts with 1 SecA dimer.

Its subcellular location is the cytoplasm. Its function is as follows. One of the proteins required for the normal export of preproteins out of the cell cytoplasm. It is a molecular chaperone that binds to a subset of precursor proteins, maintaining them in a translocation-competent state. It also specifically binds to its receptor SecA. In Rhizobium etli (strain CIAT 652), this protein is Protein-export protein SecB.